The following is a 181-amino-acid chain: Protein Syd (181 aa).

This sequence belongs to the Syd family.

The protein resides in the cell inner membrane. Functionally, interacts with the SecY protein in vivo. May bind preferentially to an uncomplexed state of SecY, thus functioning either as a chelating agent for excess SecY in the cell or as a regulatory factor that negatively controls the translocase function. The sequence is that of Protein Syd from Citrobacter koseri (strain ATCC BAA-895 / CDC 4225-83 / SGSC4696).